A 285-amino-acid polypeptide reads, in one-letter code: Protein FD (285 aa).

A compositionally biased stretch (basic residues) spans 1–12; the sequence is MLSSAKHQRNHR. Disordered stretches follow at residues 1 to 59, 79 to 107, 115 to 134, 198 to 236, and 257 to 285; these read MLSS…QKRS, NRHS…NSIF, LNQE…NGDS, SSSF…ARKQ, and KRQQ…TAPF. Residues 13–25 are compositionally biased toward polar residues; sequence LSATNKNQTLTKV. Low complexity predominate over residues 26–50; that stretch reads SSISSSSPSSSSSSSSTSSSSPLPS. Positions 98-107 are enriched in polar residues; the sequence is HHNQNPNSIF. A bZIP domain is found at 214–277; sequence GNRRHKRMIK…AIQQPKKNTL (64 aa). Residues 216-235 are basic motif; the sequence is RRHKRMIKNRESAARSRARK. Residues 242–263 are leucine-zipper; that stretch reads LELEVAHLQAENARLKRQQDQL. The span at 272-285 shows a compositional bias: polar residues; it reads PKKNTLQRSSTAPF. Phosphothreonine is present on T282.

It belongs to the bZIP family. Self-interacts. Interacts with FT and FDP/BZIP27. Interacts with GRF3 and GRF4, and in a calcium-independent manner, with CPK6 and CPK33. Phosphorylated at Thr-282 in a calcium-dependent manner by CPK6 and CPK33. Highly expressed in shoot apex.

The protein resides in the nucleus. Transcription factor required for the transition to flowering promoted by FT. The sequence is that of Protein FD from Arabidopsis thaliana (Mouse-ear cress).